The following is a 2348-amino-acid chain: Transcription factor HIVEP3 (2348 aa).

The tract at residues 1 to 105 (MDPDQSIKGT…AFMSPGKPEH (105 aa)) is disordered. Positions 27-72 (IQTSVSSSAPYPGSGTTAPSESATQELLATQPFSGPSQEKTGQQQK) are enriched in polar residues. 2 consecutive C2H2-type zinc fingers follow at residues 185–207 (YICQ…IRSH) and 213–235 (YPCG…RKSH). Residues 185–235 (YICQYCSRPCAKPSVLQKHIRSHTGERPYPCGPCGFSFKTKSNLYKHRKSH) form a ZAS1 region. Positions 204 to 1055 (IRSHTGERPY…KGKQESSEEP (852 aa)) are no DNA binding activity or transactivation activity, but complete prevention of TRAF-dependent NF-Kappa-B activation; associates with TRAF2 and JUN. 3 disordered regions span residues 239–401 (IKAG…SPPN), 475–532 (DSVK…PLLR), and 561–628 (ADPE…TKKG). Residues 257–280 (EMERIPGEEFEEPTEGESTDSEEE) are acidic 1. The span at 264 to 281 (EEFEEPTEGESTDSEEET) shows a compositional bias: acidic residues. The span at 298–323 (PLLSSSLYSSGSHGSSQERCSLSQSS) shows a compositional bias: low complexity. Residues 338-352 (SSEHPLSHKPEDTHT) show a composition bias toward basic and acidic residues. 2 stretches are compositionally biased toward polar residues: residues 372-401 (TFLS…SPPN) and 485-495 (TRRSSVESPKS). 2 stretches are compositionally biased toward low complexity: residues 513–527 (QSLL…STHP) and 589–605 (PLGG…SSKD). A compositionally biased stretch (basic and acidic residues) spans 606–623 (PTSKPSDEPEPKESDLTK). Residues 633–663 (GANYECTICGARYKKRDNYEAHKKYYCSELQ) form a CCHC HIVEP-type zinc finger. 5 disordered regions span residues 692-1098 (KLGA…PPYT), 1229-1274 (LPPV…TSAP), 1386-1427 (EGCS…KADE), 1441-1555 (STED…EGTD), and 1654-1694 (EVHL…GEPA). A compositionally biased stretch (low complexity) spans 736–749 (STKSPAEASKSAPS). The tract at residues 844–865 (EEPDRPDTEPEPPPKEPEKTEE) is acidic 2. A compositionally biased stretch (basic and acidic residues) spans 845 to 865 (EPDRPDTEPEPPPKEPEKTEE). Positions 885–891 (PKKKRLR) match the Nuclear localization signal motif. Positions 893 to 929 (AEMAQSSGESSFESSVPLSRSPSQESSISLSGSSRSA) are enriched in low complexity. Positions 930–939 (SFDREDHGKA) are enriched in basic and acidic residues. Polar residues-rich tracts occupy residues 975–985 (SEQSPNVPHSS), 1062–1073 (TKSSVPQISVGT), and 1247–1256 (SSSTEYSSDI). A coiled-coil region spans residues 1409 to 1433 (METQQQKRVKEEEASKADEKLELVS). Basic and acidic residues-rich tracts occupy residues 1416–1427 (RVKEEEASKADE), 1442–1452 (TEDRKKTEKPH), and 1518–1527 (VKKEDPKEQT). Residues 1538 to 1547 (LPLSDTSPKP) are compositionally biased toward low complexity. Residues 1665–1694 (SQKDPARVEKEEKQGKAEEGTPTSKRGEPA) show a composition bias toward basic and acidic residues. 2 C2H2-type zinc fingers span residues 1720 to 1742 (YVCE…IRTH) and 1748 to 1772 (YVCK…SKAH). The ZAS2 stretch occupies residues 1720–1772 (YVCEECGIRCKKPSMLKKHIRTHTDVRPYVCKHCHFAFKTKGNLTKHMKSKAH). The acidic 3 stretch occupies residues 1783-1841 (EELEAEEGTSDDLHQDSEGQEGAEAVEEHQFSDLEDSDSDSDLDEDEEEEEEEEESQDE). 2 disordered regions span residues 1786-1990 (EAEE…HLCG) and 2009-2038 (PAGL…ESPP). The span at 1815 to 1840 (DLEDSDSDSDLDEDEEEEEEEEESQD) shows a compositional bias: acidic residues. A compositionally biased stretch (polar residues) spans 1871–1902 (PDSTSDEVPQGSSISEATHLTASSCSTPSRGT). 5 tandem repeats follow at residues 1897–1900 (TPSR), 1927–1930 (SPRR), 1933–1936 (SPSK), 1961–1964 (SPAR), and 2024–2027 (SPTR). Residues 1952–1961 (KNDSSPQQCS) show a composition bias toward polar residues. The interval 2053 to 2148 (SPSADKSGLG…QLLSRAPCPL (96 aa)) is 5 X 4 AA tandem repeats of [ST]-P-X-[RK]. Disordered stretches follow at residues 2184-2265 (SDLT…QGHQ) and 2284-2348 (KASS…PPSI). Low complexity predominate over residues 2203 to 2216 (SPSASVSPVAKVSK). The span at 2293 to 2314 (RSSSMDCLAETSTYSPPRSRNL) shows a compositional bias: polar residues.

As to quaternary structure, interacts with TRAF1 and TRAF2 as well as with JUN. Forms a multimeric complex with RUNX2 and E3 ubiquitin ligase WWP1. In terms of processing, phosphorylated on threonine and serine residues. Phosphorylation by cyclin-dependent kinase CDK1 decreases HIVEP3 DNA binding affinity, and by epidermal growth factor receptor kinase increases its DNA binding affinity. Expressed in macrophages, lymphocytes, brain, thymus, spleen and bone marrow. Expressed in osteoblasts, whole bone and, to a lesser extent, in osteoclasts.

The protein resides in the cytoplasm. Its subcellular location is the nucleus. Plays a role of transcription factor; binds to recognition signal sequences (Rss heptamer) for somatic recombination of immunoglobulin and T-cell receptor gene segments; Also binds to the kappa-B motif of gene such as S100A4, involved in cell progression and differentiation. Kappa-B motif is a gene regulatory element found in promoters and enhancers of genes involved in immunity, inflammation, and growth and that responds to viral antigens, mitogens, and cytokines. Involvement of HIVEP3 in cell growth is strengthened by the fact that its down-regulation promotes cell cycle progression with ultimate formation of multinucleated giant cells. Strongly inhibits TNF-alpha-induced NF-kappa-B activation; Interferes with nuclear factor NF-kappa-B by several mechanisms: as transcription factor, by competing for Kappa-B motif and by repressing transcription in the nucleus; through a non transcriptional process, by inhibiting nuclear translocation of RELA by association with TRAF2, an adapter molecule in the tumor necrosis factor signaling, which blocks the formation of IKK complex. Interaction with TRAF proteins inhibits both NF-Kappa-B-mediated and c-Jun N-terminal kinase/JNK-mediated responses that include apoptosis and pro-inflammatory cytokine gene expression. Positively regulates the expression of IL2 in T-cell. Essential regulator of adult bone formation. In Mus musculus (Mouse), this protein is Transcription factor HIVEP3 (Hivep3).